A 468-amino-acid chain; its full sequence is MSRQQIGVVGMAVMGRNLALNIESKNYSVSIFNRTRSVTEEVFNQNKKKNIVPYFSIKDFIDSLLKPRCILLMVQSGKATDETIKMILPYLEKEDILIDAGNTFYKDTIRRNEKLSKYEINFIGMGVSGGELGALNGPSIMPGGQKEAYKLVLPMLEKISAKFKGEPCVSYIGPNGAGHYVKMVHNGIEYGDMQLISESYFLLKYLLNMSNEELSSTFSKWNKGELNSYLIEITKNIFIEKDEKGKYLIDRILDVAEDKGTGKWISKSALDLREPLSLITESVFARYLSSLKRQRIIASKILQGPKIKTFIKDKNSFIEEVRRALYLGKIISYAQGFSQLKRASEKYHWNLKYGEIAKIFRAGCIIRANFLQKITDEYTQNKNVVNLLLTPYFSKIANEYENSLRNIVMYAIKYGISTPTFSAAISYYDSYRALYLPANLIQAQRDYFGSHTYQRTDQTGYFHTNWSQ.

NADP(+) contacts are provided by residues 10–15, 33–35, 74–76, and Asn-102; these read GMAVMG, NRT, and VQS. Substrate contacts are provided by residues Asn-102 and 128–130; that span reads SGG. The Proton acceptor role is filled by Lys-182. 185 to 186 provides a ligand contact to substrate; the sequence is HN. Residue Glu-189 is the Proton donor of the active site. The substrate site is built by Tyr-190, Lys-259, Arg-286, Arg-445, and His-451.

This sequence belongs to the 6-phosphogluconate dehydrogenase family. In terms of assembly, homodimer.

The catalysed reaction is 6-phospho-D-gluconate + NADP(+) = D-ribulose 5-phosphate + CO2 + NADPH. Its pathway is carbohydrate degradation; pentose phosphate pathway; D-ribulose 5-phosphate from D-glucose 6-phosphate (oxidative stage): step 3/3. Functionally, catalyzes the oxidative decarboxylation of 6-phosphogluconate to ribulose 5-phosphate and CO(2), with concomitant reduction of NADP to NADPH. The sequence is that of 6-phosphogluconate dehydrogenase, decarboxylating (gnd) from Buchnera aphidicola subsp. Acyrthosiphon pisum (strain APS) (Acyrthosiphon pisum symbiotic bacterium).